Consider the following 290-residue polypeptide: Diaminopimelate epimerase (290 aa).

Substrate-binding residues include Asn-11 and Asn-78. Cys-87 acts as the Proton donor in catalysis. Substrate is bound by residues 88-89 (GN), Asn-163, Asn-199, and 217-218 (ER). The active-site Proton acceptor is the Cys-226. 227–228 (GT) is a binding site for substrate.

The protein belongs to the diaminopimelate epimerase family. As to quaternary structure, homodimer.

Its subcellular location is the cytoplasm. It carries out the reaction (2S,6S)-2,6-diaminopimelate = meso-2,6-diaminopimelate. It functions in the pathway amino-acid biosynthesis; L-lysine biosynthesis via DAP pathway; DL-2,6-diaminopimelate from LL-2,6-diaminopimelate: step 1/1. Functionally, catalyzes the stereoinversion of LL-2,6-diaminopimelate (L,L-DAP) to meso-diaminopimelate (meso-DAP), a precursor of L-lysine and an essential component of the bacterial peptidoglycan. The protein is Diaminopimelate epimerase of Mycobacterium ulcerans (strain Agy99).